We begin with the raw amino-acid sequence, 273 residues long: Acetyl-coenzyme A carboxylase carboxyl transferase subunit alpha (273 aa).

Positions 1–244 constitute a CoA carboxyltransferase C-terminal domain; it reads MKKATQSKAW…KVVLKQALDE (244 aa).

This sequence belongs to the AccA family. Acetyl-CoA carboxylase is a heterohexamer composed of biotin carboxyl carrier protein (AccB), biotin carboxylase (AccC) and two subunits each of ACCase subunit alpha (AccA) and ACCase subunit beta (AccD).

It localises to the cytoplasm. It carries out the reaction N(6)-carboxybiotinyl-L-lysyl-[protein] + acetyl-CoA = N(6)-biotinyl-L-lysyl-[protein] + malonyl-CoA. It functions in the pathway lipid metabolism; malonyl-CoA biosynthesis; malonyl-CoA from acetyl-CoA: step 1/1. Its function is as follows. Component of the acetyl coenzyme A carboxylase (ACC) complex. First, biotin carboxylase catalyzes the carboxylation of biotin on its carrier protein (BCCP) and then the CO(2) group is transferred by the carboxyltransferase to acetyl-CoA to form malonyl-CoA. This Acinetobacter baumannii (strain AB0057) protein is Acetyl-coenzyme A carboxylase carboxyl transferase subunit alpha.